Reading from the N-terminus, the 361-residue chain is Phospho-N-acetylmuramoyl-pentapeptide-transferase (361 aa).

The next 10 helical transmembrane spans lie at 21–41 (YITFRTGGAMVTALLISFVIG), 72–92 (TPTMGGLMILIAVIVSTLLWV), 94–114 (LANVYTWIVLLVTVGFGLIGF), 135–155 (LAWTIAIAGVAATWYIAVTPH), 169–189 (LLVNLGWFFIPFAILVMVGAS), 200–220 (GLAIVPIMIAAATFGLIAYLS), 240–260 (LAVFCGALVGAGLGFLWFNAP), 263–283 (MVFMGDTGSLSMGGALGAVSV), 289–309 (LVLAIVGGLFVLEAVSVMVQV), and 338–358 (TVVIRFWIIAAILALVGLSTL).

The protein belongs to the glycosyltransferase 4 family. MraY subfamily. Mg(2+) is required as a cofactor.

Its subcellular location is the cell inner membrane. It carries out the reaction UDP-N-acetyl-alpha-D-muramoyl-L-alanyl-gamma-D-glutamyl-meso-2,6-diaminopimeloyl-D-alanyl-D-alanine + di-trans,octa-cis-undecaprenyl phosphate = di-trans,octa-cis-undecaprenyl diphospho-N-acetyl-alpha-D-muramoyl-L-alanyl-D-glutamyl-meso-2,6-diaminopimeloyl-D-alanyl-D-alanine + UMP. The protein operates within cell wall biogenesis; peptidoglycan biosynthesis. Functionally, catalyzes the initial step of the lipid cycle reactions in the biosynthesis of the cell wall peptidoglycan: transfers peptidoglycan precursor phospho-MurNAc-pentapeptide from UDP-MurNAc-pentapeptide onto the lipid carrier undecaprenyl phosphate, yielding undecaprenyl-pyrophosphoryl-MurNAc-pentapeptide, known as lipid I. This is Phospho-N-acetylmuramoyl-pentapeptide-transferase from Rhodospirillum centenum (strain ATCC 51521 / SW).